A 95-amino-acid chain; its full sequence is MTVDAATVRRIAHLARIAVDDAEVPHLQGELNAILAFVEQLQEVNVDGVEPMTSVMPMEMKKRADVVNDGGIADKIVGNAPVTDDHFFLVPKVVE.

The protein belongs to the GatC family. As to quaternary structure, heterotrimer of A, B and C subunits.

It carries out the reaction L-glutamyl-tRNA(Gln) + L-glutamine + ATP + H2O = L-glutaminyl-tRNA(Gln) + L-glutamate + ADP + phosphate + H(+). The enzyme catalyses L-aspartyl-tRNA(Asn) + L-glutamine + ATP + H2O = L-asparaginyl-tRNA(Asn) + L-glutamate + ADP + phosphate + 2 H(+). Its function is as follows. Allows the formation of correctly charged Asn-tRNA(Asn) or Gln-tRNA(Gln) through the transamidation of misacylated Asp-tRNA(Asn) or Glu-tRNA(Gln) in organisms which lack either or both of asparaginyl-tRNA or glutaminyl-tRNA synthetases. The reaction takes place in the presence of glutamine and ATP through an activated phospho-Asp-tRNA(Asn) or phospho-Glu-tRNA(Gln). The polypeptide is Aspartyl/glutamyl-tRNA(Asn/Gln) amidotransferase subunit C (Nitrobacter hamburgensis (strain DSM 10229 / NCIMB 13809 / X14)).